A 260-amino-acid chain; its full sequence is CD40 ligand (260 aa).

The Cytoplasmic portion of the chain corresponds to 1–22 (MIETYSQTAPRSVAPGPPVSMK). A helical; Signal-anchor for type II membrane protein transmembrane segment spans residues 23 to 46 (IFMYLLTVFLITQMIGSALFAVYL). Topologically, residues 47–260 (HRRLDKIEDE…GFTSFGLLKL (214 aa)) are extracellular. A THD domain is found at 121–260 (VAAHVISEAS…GFTSFGLLKL (140 aa)). Cysteines 177 and 217 form a disulfide. N-linked (GlcNAc...) asparagine glycosylation occurs at Asn239.

This sequence belongs to the tumor necrosis factor family. In terms of assembly, homotrimer. Interacts with CD28. CD40 ligand, soluble form: Exists as either a monomer or a homotrimer. Forms a ternary complex between CD40 and integrins for CD40-CD40LG signaling. In terms of processing, the soluble form derives from the membrane form by proteolytic processing.

It localises to the cell membrane. Its subcellular location is the cell surface. The protein localises to the secreted. Functionally, cytokine that acts as a ligand to CD40/TNFRSF5. Costimulates T-cell proliferation and cytokine production. Its cross-linking on T-cells generates a costimulatory signal which enhances the production of IL4 and IL10 in conjunction with the TCR/CD3 ligation and CD28 costimulation. Induces the activation of NF-kappa-B. Induces the activation of kinases MAPK8 and PAK2 in T-cells. Mediates B-cell proliferation in the absence of co-stimulus as well as IgE production in the presence of IL4. Involved in immunoglobulin class switching. Its function is as follows. Acts as a ligand for integrins, specifically ITGA5:ITGB1 and ITGAV:ITGB3; both integrins and the CD40 receptor are required for activation of CD40-CD40LG signaling, which have cell-type dependent effects, such as B-cell activation, NF-kappa-B signaling and anti-apoptotic signaling. The polypeptide is CD40 ligand (CD40LG) (Felis catus (Cat)).